A 622-amino-acid chain; its full sequence is Probable potassium transport system protein Kup (622 aa).

12 helical membrane-spanning segments follow: residues 7 to 27, 44 to 64, 95 to 115, 133 to 153, 165 to 185, 199 to 219, 243 to 263, 290 to 310, 338 to 358, 370 to 390, 395 to 415, and 422 to 442; these read LAIG…LYAF, VLGV…IQYV, GWLV…DSMI, PELQ…LFVL, FAPV…ISIV, AVLF…SVVL, WFGF…AMIV, LVIL…SGAF, IYIP…VLTF, IAVT…LVGV, WYYA…YFAA, and DGGW…TTWA.

The protein belongs to the HAK/KUP transporter (TC 2.A.72) family.

It is found in the cell inner membrane. It catalyses the reaction K(+)(in) + H(+)(in) = K(+)(out) + H(+)(out). Functionally, transport of potassium into the cell. Likely operates as a K(+):H(+) symporter. This Erythrobacter litoralis (strain HTCC2594) protein is Probable potassium transport system protein Kup.